The following is a 45-amino-acid chain: Major cold shock protein (45 aa).

Positions 1–45 constitute a CSD domain; it reads EKGFGFISTENGQDVFAHFSAIQTNGFKTLEEGQKVEFDVEEGQR.

As to quaternary structure, homodimer.

The protein resides in the cytoplasm. This Streptococcus dysgalactiae protein is Major cold shock protein (cspA).